The primary structure comprises 209 residues: Large ribosomal subunit protein uL4 (209 aa).

Positions 47–72 are disordered; it reads TSSTKTRSEVRGSSKKPWKQKGTGRA. Residues 59–72 are compositionally biased toward basic residues; sequence SSKKPWKQKGTGRA.

Belongs to the universal ribosomal protein uL4 family. As to quaternary structure, part of the 50S ribosomal subunit.

In terms of biological role, one of the primary rRNA binding proteins, this protein initially binds near the 5'-end of the 23S rRNA. It is important during the early stages of 50S assembly. It makes multiple contacts with different domains of the 23S rRNA in the assembled 50S subunit and ribosome. Functionally, forms part of the polypeptide exit tunnel. This is Large ribosomal subunit protein uL4 from Borreliella burgdorferi (strain ZS7) (Borrelia burgdorferi).